A 132-amino-acid chain; its full sequence is D-ribose pyranase (132 aa).

Histidine 20 (proton donor) is an active-site residue. Residues aspartate 28, histidine 99, and 121-123 (YSN) each bind substrate.

The protein belongs to the RbsD / FucU family. RbsD subfamily. In terms of assembly, homodecamer.

Its subcellular location is the cytoplasm. It catalyses the reaction beta-D-ribopyranose = beta-D-ribofuranose. The protein operates within carbohydrate metabolism; D-ribose degradation; D-ribose 5-phosphate from beta-D-ribopyranose: step 1/2. In terms of biological role, catalyzes the interconversion of beta-pyran and beta-furan forms of D-ribose. This Streptococcus agalactiae serotype III (strain NEM316) protein is D-ribose pyranase.